The following is a 127-amino-acid chain: Large ribosomal subunit protein eL8 (127 aa).

This sequence belongs to the eukaryotic ribosomal protein eL8 family. Part of the 50S ribosomal subunit. Probably part of the RNase P complex.

It localises to the cytoplasm. Functionally, multifunctional RNA-binding protein that recognizes the K-turn motif in ribosomal RNA, the RNA component of RNase P, box H/ACA, box C/D and box C'/D' sRNAs. The sequence is that of Large ribosomal subunit protein eL8 from Desulfurococcus amylolyticus (strain DSM 18924 / JCM 16383 / VKM B-2413 / 1221n) (Desulfurococcus kamchatkensis).